The chain runs to 442 residues: Serine protease AprX (442 aa).

The Peptidase S8 domain maps to K122–V439. Residues D155 and H187 each act as charge relay system in the active site. A disordered region spans residues D318–P337. Catalysis depends on S384, which acts as the Charge relay system. Residues E423–Q442 form a disordered region.

It belongs to the peptidase S8 family.

The protein localises to the cytoplasm. Is completely inhibited by phenylmethanesulphonylfluoride (PMSF) in vitro. Functionally, displays serine protease activity. Seems to have a broad substrate specificity. The chain is Serine protease AprX (aprX) from Bacillus subtilis (strain 168).